The primary structure comprises 262 residues: Thiazole synthase (262 aa).

Lys-104 acts as the Schiff-base intermediate with DXP in catalysis. 1-deoxy-D-xylulose 5-phosphate is bound by residues Gly-165, 191–192 (AG), and 213–214 (NT).

This sequence belongs to the ThiG family. As to quaternary structure, homotetramer. Forms heterodimers with either ThiH or ThiS.

It is found in the cytoplasm. The enzyme catalyses [ThiS sulfur-carrier protein]-C-terminal-Gly-aminoethanethioate + 2-iminoacetate + 1-deoxy-D-xylulose 5-phosphate = [ThiS sulfur-carrier protein]-C-terminal Gly-Gly + 2-[(2R,5Z)-2-carboxy-4-methylthiazol-5(2H)-ylidene]ethyl phosphate + 2 H2O + H(+). The protein operates within cofactor biosynthesis; thiamine diphosphate biosynthesis. In terms of biological role, catalyzes the rearrangement of 1-deoxy-D-xylulose 5-phosphate (DXP) to produce the thiazole phosphate moiety of thiamine. Sulfur is provided by the thiocarboxylate moiety of the carrier protein ThiS. In vitro, sulfur can be provided by H(2)S. The chain is Thiazole synthase from Nitrosococcus oceani (strain ATCC 19707 / BCRC 17464 / JCM 30415 / NCIMB 11848 / C-107).